Here is a 260-residue protein sequence, read N- to C-terminus: Hydroxyethylthiazole kinase (260 aa).

Met-36 lines the substrate pocket. ATP-binding residues include Arg-112 and Thr-157. Gly-184 lines the substrate pocket.

Belongs to the Thz kinase family. The cofactor is Mg(2+).

It catalyses the reaction 5-(2-hydroxyethyl)-4-methylthiazole + ATP = 4-methyl-5-(2-phosphooxyethyl)-thiazole + ADP + H(+). It participates in cofactor biosynthesis; thiamine diphosphate biosynthesis; 4-methyl-5-(2-phosphoethyl)-thiazole from 5-(2-hydroxyethyl)-4-methylthiazole: step 1/1. In terms of biological role, catalyzes the phosphorylation of the hydroxyl group of 4-methyl-5-beta-hydroxyethylthiazole (THZ). The chain is Hydroxyethylthiazole kinase from Shouchella clausii (strain KSM-K16) (Alkalihalobacillus clausii).